The following is a 523-amino-acid chain: Calcium-dependent protein kinase 1 (523 aa).

The interval 1 to 36 (MGCNQSKSANDVRGNKVNHVNSKKKNNKREDTNDGE) is disordered. Glycine 2 carries the N-myristoyl glycine lipid modification. Cysteine 3 carries the S-palmitoyl cysteine lipid modification. One can recognise a Protein kinase domain in the interval 57-324 (YFKVRKLGSG…AEEALNSRWI (268 aa)). ATP contacts are provided by residues 63–71 (LGSGAYGEV), lysine 86, and lysine 90. A Phosphoserine modification is found at serine 65. Serine 117 bears the Phosphoserine mark. Aspartate 190 functions as the Proton acceptor in the catalytic mechanism. Phosphoserine is present on residues serine 216 and serine 219. At threonine 230 the chain carries Phosphothreonine. Residue serine 334 is modified to Phosphoserine. The J domain autoinhibitory motif signature appears at 345-352 (NMRKFEGS). The interval 345–363 (NMRKFEGSQKLAQAAILFI) is j domain. The J domain interacts with the EF-hand domains signature appears at 353–363 (QKLAQAAILFI). EF-hand domains lie at 371–406 (EERKELTDIFKKLDKNGDGQLDKKELIEGYNVLRNF), 415–450 (NVEEEVDNILKEVDFDKNGYIEYSEFISVCMDKQIL), 451–486 (FSEERLRRAFNLFDTDKSGKITKEELANLFGLTSIS), and 487–520 (EKTWNDVLGEADQNKDNMIDFDEFVSMMHKICDH). The Ca(2+) site is built by aspartate 384, asparagine 386, aspartate 388, glutamine 390, glutamate 395, aspartate 428, aspartate 430, asparagine 432, tyrosine 434, glutamate 439, aspartate 464, aspartate 466, serine 468, lysine 470, glutamate 475, aspartate 498, asparagine 500, aspartate 502, methionine 504, and glutamate 509.

The protein belongs to the protein kinase superfamily. Ser/Thr protein kinase family. CDPK subfamily. In terms of assembly, monomer. It depends on Mg(2+) as a cofactor. Post-translationally, myristoylated. Myristoylation and palmitoylation are required for the localization to the parasitophorous vacuole membrane. Palmitoylated. Palmitoylation increases in merozoites in response to low level of extracellular K(+) in the host blood. Myristoylation and palmitoylation are required for the localization to the parasitophorous vacuole membrane. In terms of processing, phosphorylation at Thr-230 may regulate CDPK1 kinase activity. Phosphorylation increases in response to an increase in intracellular Ca(2+) levels. Autophosphorylated in vitro. Autophosphorylation does not affect membrane localization in vitro.

It is found in the membrane. The protein resides in the cell membrane. The protein localises to the parasitophorous vacuole membrane. Its subcellular location is the cytoplasm. It localises to the cell projection. It is found in the cilium. The protein resides in the flagellum. The protein localises to the host cell membrane. The catalysed reaction is L-seryl-[protein] + ATP = O-phospho-L-seryl-[protein] + ADP + H(+). It catalyses the reaction L-threonyl-[protein] + ATP = O-phospho-L-threonyl-[protein] + ADP + H(+). With respect to regulation, activated by calcium. Upon calcium binding to the EF-hand domains, the C-terminus of the junction domain (J domain) undergoes a conformational change which results in the dissociation of the pseudo-substrate inhibitory motif from the catalytic domain. This, in turn may facilitate the autophosphorylation of the activation loop at Thr-230, which leads to the kinase activation. Its function is as follows. Calcium-dependent protein kinase which acts as a sensor and effector of intracellular Ca(2+) levels probably in part downstream of cGMP-activated PKG kinase. During the liver stage, involved in sporozoite motility and thus in sporozoite invasion of host hepatocytes, probably together with CDPK4 and CDPK5. In the mosquito midgut and during the last stage of male gamete exflagellation, may play a role in the rupture of the host erythrocyte membrane. In the mosquito midgut, required for the differentiation of the zygote into the ookinete by promoting the translational activation of a subset of repressed mRNAs; these mRNAs are kept repressed in the zygote by the DOZI- or CITH-containing mRNP complexes. Dispensable during the asexual blood stage. The protein is Calcium-dependent protein kinase 1 of Plasmodium berghei (strain Anka).